The sequence spans 142 residues: Prefoldin subunit alpha (142 aa).

The protein belongs to the prefoldin subunit alpha family. In terms of assembly, heterohexamer of two alpha and four beta subunits.

The protein localises to the cytoplasm. In terms of biological role, molecular chaperone capable of stabilizing a range of proteins. Seems to fulfill an ATP-independent, HSP70-like function in archaeal de novo protein folding. The protein is Prefoldin subunit alpha of Methanosarcina mazei (strain ATCC BAA-159 / DSM 3647 / Goe1 / Go1 / JCM 11833 / OCM 88) (Methanosarcina frisia).